A 689-amino-acid chain; its full sequence is Beta-adrenergic receptor kinase 1 (689 aa).

Positions 1 to 190 (MADLEAVLAD…ELNIHLTMND (190 aa)) are N-terminal. Positions 54-175 (TFEKIFSQKL…IESDKFTRFC (122 aa)) constitute an RGS domain. A Protein kinase domain is found at 191–453 (FSVHRIIGRG…AQEVKESPFF (263 aa)). ATP is bound by residues 197 to 205 (IGRGGFGEV) and Lys-220. The active-site Proton acceptor is Asp-317. The AGC-kinase C-terminal domain occupies 454–521 (RSLDWQMVFL…TISERWQQEV (68 aa)). A PH domain is found at 558-652 (DCIVHGYMSK…WKKELRDAYR (95 aa)). At Ser-670 the chain carries Phosphoserine.

This sequence belongs to the protein kinase superfamily. AGC Ser/Thr protein kinase family. GPRK subfamily. In terms of assembly, interacts with the heterodimer formed by GNB1 and GNG2. Interacts with GIT1. Interacts with, and phosphorylates chemokine-stimulated CCR5. Interacts with ARRB1. Interacts with LPAR1 and LPAR2. Interacts with RALA in response to LPAR1 activation. ADRBK1 and RALA mutually inhibit each other's binding to LPAR1. Interacts with ADRB2.

The protein resides in the cytoplasm. It is found in the cell membrane. Its subcellular location is the postsynapse. It localises to the presynapse. The enzyme catalyses [beta-adrenergic receptor] + ATP = [beta-adrenergic receptor]-phosphate + ADP + H(+). With respect to regulation, in contrast to other AGC family kinases, the catalytic activity is solely regulated by the binding of substrates and ligands, not by phosphorylation of the kinase domain. In terms of biological role, specifically phosphorylates the agonist-occupied form of the beta-adrenergic and closely related receptors, probably inducing a desensitization of them. Key regulator of LPAR1 signaling. Competes with RALA for binding to LPAR1 thus affecting the signaling properties of the receptor. Desensitizes LPAR1 and LPAR2 in a phosphorylation-independent manner. Positively regulates ciliary smoothened (SMO)-dependent Hedgehog (Hh) signaling pathway by facilitating the trafficking of SMO into the cilium and the stimulation of SMO activity. Inhibits relaxation of airway smooth muscle in response to blue light. This chain is Beta-adrenergic receptor kinase 1, found in Mus musculus (Mouse).